The primary structure comprises 475 residues: Ribulose bisphosphate carboxylase large chain (475 aa).

Residues 1-2 (MA) constitute a propeptide that is removed on maturation. An N-acetylproline modification is found at Pro3. At Lys14 the chain carries N6,N6,N6-trimethyllysine. Residues Asn123 and Thr173 each coordinate substrate. Catalysis depends on Lys175, which acts as the Proton acceptor. Lys177 provides a ligand contact to substrate. Mg(2+) is bound by residues Lys201, Asp203, and Glu204. An N6-carboxylysine modification is found at Lys201. His294 acts as the Proton acceptor in catalysis. Arg295, His327, and Ser379 together coordinate substrate.

The protein belongs to the RuBisCO large chain family. Type I subfamily. Heterohexadecamer of 8 large chains and 8 small chains; disulfide-linked. The disulfide link is formed within the large subunit homodimers. Mg(2+) is required as a cofactor. Post-translationally, the disulfide bond which can form in the large chain dimeric partners within the hexadecamer appears to be associated with oxidative stress and protein turnover.

The protein localises to the plastid. The protein resides in the chloroplast. The catalysed reaction is 2 (2R)-3-phosphoglycerate + 2 H(+) = D-ribulose 1,5-bisphosphate + CO2 + H2O. It catalyses the reaction D-ribulose 1,5-bisphosphate + O2 = 2-phosphoglycolate + (2R)-3-phosphoglycerate + 2 H(+). RuBisCO catalyzes two reactions: the carboxylation of D-ribulose 1,5-bisphosphate, the primary event in carbon dioxide fixation, as well as the oxidative fragmentation of the pentose substrate in the photorespiration process. Both reactions occur simultaneously and in competition at the same active site. The polypeptide is Ribulose bisphosphate carboxylase large chain (Tupiella akineta (Green alga)).